We begin with the raw amino-acid sequence, 805 residues long: Centrosomal protein of 85 kDa-like (805 aa).

2 disordered regions span residues 1–27 and 50–89; these read MWGRFLAPEASGRDSPGGARSFPAGPD and RNNHIRRHSIASDSGDTGIGTSCSDSVEDHSTSSGTLSFK. Ser15 carries the phosphoserine modification. Residues 60–74 are compositionally biased toward polar residues; the sequence is ASDSGDTGIGTSCSD. The residue at position 207 (Ser207) is a Phosphoserine. Residues 439-682 are a coiled coil; it reads SQQGEFEQKL…LENQRQTDET (244 aa).

It belongs to the CEP85 family. Isoform 1 and isoform 4 are expressed in spleen, lymph, thymus, tonsil and peripheral blood leukocytes, with isoform 1 expressed at higher levels. Isoform 4 is detected in K-562 leukemia cells and in the blood of precursor T lymphoblastic lymphoma (T-ALL) patients.

It localises to the cytoplasm. Its subcellular location is the cytoskeleton. It is found in the microtubule organizing center. The protein localises to the centrosome. Functionally, plays an essential role in neuronal cell migration. This is Centrosomal protein of 85 kDa-like from Homo sapiens (Human).